Here is a 225-residue protein sequence, read N- to C-terminus: Immune-associated nucleotide-binding protein 1 (225 aa).

Positions 6-214 constitute an AIG1-type G domain; it reads CPVTNLLLLG…YTENMHRKIK (209 aa). The G1 stretch occupies residues 15-22; it reads GRSENGKS. 15–23 is a GTP binding site; sequence GRSENGKSS. Residues 42-46 form a G2 region; that stretch reads DMDQR. Positions 64–67 are G3; the sequence is DTPG. Residues 134–137 form a G4 region; it reads TGGD. The segment at 173 to 175 is G5; that stretch reads NNK. Asn174 provides a ligand contact to GTP.

The protein belongs to the TRAFAC class TrmE-Era-EngA-EngB-Septin-like GTPase superfamily. AIG1/Toc34/Toc159-like paraseptin GTPase family. IAN subfamily. As to expression, mostly expressed in pollen.

In Arabidopsis thaliana (Mouse-ear cress), this protein is Immune-associated nucleotide-binding protein 1.